Reading from the N-terminus, the 208-residue chain is Large ribosomal subunit protein uL3 (208 aa).

The segment at G116 to A148 is disordered.

This sequence belongs to the universal ribosomal protein uL3 family. Part of the 50S ribosomal subunit. Forms a cluster with proteins L14 and L19.

One of the primary rRNA binding proteins, it binds directly near the 3'-end of the 23S rRNA, where it nucleates assembly of the 50S subunit. In Streptococcus pyogenes serotype M12 (strain MGAS2096), this protein is Large ribosomal subunit protein uL3.